The chain runs to 182 residues: ATP-dependent protease subunit HslV (182 aa).

Thr-12 is a catalytic residue. Residues Ala-167, Cys-170, and Thr-173 each contribute to the Na(+) site.

Belongs to the peptidase T1B family. HslV subfamily. In terms of assembly, a double ring-shaped homohexamer of HslV is capped on each side by a ring-shaped HslU homohexamer. The assembly of the HslU/HslV complex is dependent on binding of ATP.

It is found in the cytoplasm. It carries out the reaction ATP-dependent cleavage of peptide bonds with broad specificity.. With respect to regulation, allosterically activated by HslU binding. Functionally, protease subunit of a proteasome-like degradation complex believed to be a general protein degrading machinery. The sequence is that of ATP-dependent protease subunit HslV from Chlorobium phaeobacteroides (strain DSM 266 / SMG 266 / 2430).